Here is a 368-residue protein sequence, read N- to C-terminus: Isopentenyl-diphosphate delta-isomerase (368 aa).

7–8 is a binding site for substrate; sequence RK. Residues T65, 66-68, S96, and N125 contribute to the FMN site; that span reads GMT. 96-98 serves as a coordination point for substrate; that stretch reads SQR. Q160 is a binding site for substrate. E161 serves as a coordination point for Mg(2+). FMN contacts are provided by residues K193, S218, T223, 275-277, and 296-297; these read GIR and AL.

The protein belongs to the IPP isomerase type 2 family. As to quaternary structure, homooctamer. Dimer of tetramers. FMN is required as a cofactor. The cofactor is NADPH. Mg(2+) serves as cofactor.

The protein localises to the cytoplasm. The catalysed reaction is isopentenyl diphosphate = dimethylallyl diphosphate. Its function is as follows. Involved in the biosynthesis of isoprenoids. Catalyzes the 1,3-allylic rearrangement of the homoallylic substrate isopentenyl (IPP) to its allylic isomer, dimethylallyl diphosphate (DMAPP). In Saccharolobus solfataricus (strain ATCC 35092 / DSM 1617 / JCM 11322 / P2) (Sulfolobus solfataricus), this protein is Isopentenyl-diphosphate delta-isomerase.